The primary structure comprises 60 residues: Large ribosomal subunit protein bL32 (60 aa).

Positions methionine 1 to histidine 23 are enriched in basic residues. Residues methionine 1–valine 26 form a disordered region.

Belongs to the bacterial ribosomal protein bL32 family.

The protein is Large ribosomal subunit protein bL32 of Deinococcus geothermalis (strain DSM 11300 / CIP 105573 / AG-3a).